Consider the following 104-residue polypeptide: N(4)-acetylcytidine amidohydrolase (104 aa).

In terms of domain architecture, ASCH spans 7 to 93; sequence MTFFSRFEAD…EVIQEIYPGI (87 aa). The active-site Proton acceptor is the Lys22. The Nucleophile role is filled by Thr25. The active-site Proton donor is the Glu75.

It belongs to the N(4)-acetylcytidine amidohydrolase family.

The enzyme catalyses N(4)-acetylcytidine + H2O = cytidine + acetate + H(+). The catalysed reaction is N(4)-acetyl-2'-deoxycytidine + H2O = 2'-deoxycytidine + acetate + H(+). It carries out the reaction N(4)-acetylcytosine + H2O = cytosine + acetate + H(+). Catalyzes the hydrolysis of N(4)-acetylcytidine (ac4C). The protein is N(4)-acetylcytidine amidohydrolase of Vibrio vulnificus (strain CMCP6).